The chain runs to 512 residues: Cobyric acid synthase (512 aa).

In terms of domain architecture, GATase cobBQ-type spans 251-451 (ALDITVIRLP…IHGLFDSANF (201 aa)). Cys332 acts as the Nucleophile in catalysis. The active site involves His443.

Belongs to the CobB/CobQ family. CobQ subfamily.

It participates in cofactor biosynthesis; adenosylcobalamin biosynthesis. In terms of biological role, catalyzes amidations at positions B, D, E, and G on adenosylcobyrinic A,C-diamide. NH(2) groups are provided by glutamine, and one molecule of ATP is hydrogenolyzed for each amidation. The polypeptide is Cobyric acid synthase (Photorhabdus laumondii subsp. laumondii (strain DSM 15139 / CIP 105565 / TT01) (Photorhabdus luminescens subsp. laumondii)).